A 524-amino-acid chain; its full sequence is Acetyl-CoA decarbonylase/synthase complex subunit beta (524 aa).

C212, C215, C301, and C303 together coordinate [Ni-Fe-S] cluster. The interval 436–466 is disordered; sequence WVEEEEEEAEEVAEEAAAEAAPAAQPAQAAQ. The segment covering 437–452 has biased composition (acidic residues); the sequence is VEEEEEEAEEVAEEAA. A compositionally biased stretch (low complexity) spans 453–466; it reads AEAAPAAQPAQAAQ.

It belongs to the CdhC family. As to quaternary structure, monomer. The ACDS complex is made up of alpha, epsilon, beta, gamma and delta chains with a probable stoichiometry of (alpha(2)epsilon(2))(4)-beta(8)-(gamma(1)delta(1))(8). The cofactor is [Ni-Fe-S] cluster.

The catalysed reaction is Co(I)-[corrinoid Fe-S protein] + acetyl-CoA + H(+) = methyl-Co(III)-[corrinoid Fe-S protein] + CO + CoA. Part of a complex that catalyzes the reversible cleavage of acetyl-CoA, allowing autotrophic growth from CO(2). The alpha-epsilon complex generates CO from CO(2), while the beta subunit (this protein) combines the CO with CoA and a methyl group to form acetyl-CoA. The methyl group, which is incorporated into acetyl-CoA, is transferred to the beta subunit by a corrinoid iron-sulfur protein (the gamma-delta complex). This Archaeoglobus fulgidus (strain ATCC 49558 / DSM 4304 / JCM 9628 / NBRC 100126 / VC-16) protein is Acetyl-CoA decarbonylase/synthase complex subunit beta.